A 160-amino-acid chain; its full sequence is 2-C-methyl-D-erythritol 2,4-cyclodiphosphate synthase (160 aa).

A divalent metal cation contacts are provided by aspartate 11 and histidine 13. Residues 11-13 and 37-38 contribute to the 4-CDP-2-C-methyl-D-erythritol 2-phosphate site; these read DVH and HS. Position 45 (histidine 45) interacts with a divalent metal cation. Residues 59–61, 64–68, 103–109, 135–138, phenylalanine 142, and arginine 145 contribute to the 4-CDP-2-C-methyl-D-erythritol 2-phosphate site; these read DIG, FPDTD, AQAPKMA, and TTTE.

The protein belongs to the IspF family. Homotrimer. It depends on a divalent metal cation as a cofactor.

The catalysed reaction is 4-CDP-2-C-methyl-D-erythritol 2-phosphate = 2-C-methyl-D-erythritol 2,4-cyclic diphosphate + CMP. Its pathway is isoprenoid biosynthesis; isopentenyl diphosphate biosynthesis via DXP pathway; isopentenyl diphosphate from 1-deoxy-D-xylulose 5-phosphate: step 4/6. Involved in the biosynthesis of isopentenyl diphosphate (IPP) and dimethylallyl diphosphate (DMAPP), two major building blocks of isoprenoid compounds. Catalyzes the conversion of 4-diphosphocytidyl-2-C-methyl-D-erythritol 2-phosphate (CDP-ME2P) to 2-C-methyl-D-erythritol 2,4-cyclodiphosphate (ME-CPP) with a corresponding release of cytidine 5-monophosphate (CMP). The protein is 2-C-methyl-D-erythritol 2,4-cyclodiphosphate synthase of Thiobacillus denitrificans (strain ATCC 25259 / T1).